Here is a 401-residue protein sequence, read N- to C-terminus: Phosphoglycerate kinase, cytosolic (401 aa).

The (2R)-3-phosphoglycerate site is built by Ala-24, Asp-25, Asn-27, Arg-41, Ser-63, His-64, Gly-66, Arg-67, Arg-122, His-154, and Arg-155. Gly-200 serves as a coordination point for ADP. Gly-200 is a binding site for CDP. 2 residues coordinate AMP: Lys-202 and Lys-206. Lys-206 is an ATP binding site. Gly-224 is a binding site for ADP. Gly-224 serves as a coordination point for CDP. Gly-225 and Gly-297 together coordinate AMP. 2 residues coordinate ATP: Gly-225 and Gly-297. The CDP site is built by Gly-322 and Phe-327. Phe-327 serves as a coordination point for ADP. Residue Glu-328 coordinates AMP. ATP-binding residues include Glu-328, Asp-359, and Ser-360. Asp-359 contributes to the Mg(2+) binding site.

The protein belongs to the phosphoglycerate kinase family. Monomer. Mg(2+) serves as cofactor.

Its subcellular location is the cytoplasm. It catalyses the reaction (2R)-3-phosphoglycerate + ATP = (2R)-3-phospho-glyceroyl phosphate + ADP. It functions in the pathway carbohydrate degradation; glycolysis; pyruvate from D-glyceraldehyde 3-phosphate: step 2/5. This is Phosphoglycerate kinase, cytosolic from Triticum aestivum (Wheat).